The chain runs to 333 residues: E3 ubiquitin-protein ligase MIR1 (333 aa).

An RING-CH-type zinc finger spans residues M1 to R60. At M1 to E82 the chain is on the cytoplasmic side. Zn(2+) contacts are provided by C9, C12, C24, C26, H34, C37, C50, and C53. Residues L83–V103 form a helical membrane-spanning segment. At W104 to A121 the chain is on the extracellular side. A helical membrane pass occupies residues A122–F142. Over H143 to H333 the chain is Cytoplasmic. The tract at residues G187–A257 is disordered. A compositionally biased stretch (low complexity) spans P195 to A221. The span at A235–N252 shows a compositional bias: basic and acidic residues.

As to quaternary structure, binds human MHC-I and CD1D.

It is found in the host cell membrane. The protein resides in the host endoplasmic reticulum. The catalysed reaction is [E2 ubiquitin-conjugating enzyme]-S-ubiquitinyl-L-cysteine + [acceptor protein]-L-cysteine = [E2 ubiquitin-conjugating enzyme]-L-cysteine + [acceptor protein]-S-ubiquitinyl-L-cysteine.. It functions in the pathway protein modification; protein ubiquitination. Functionally, membrane-bound E3 ubiquitin ligase expressed during late stages of lytic replication to mediate polyubiquitination of various host membrane proteins related to the immune response. Promotes ubiquitination and subsequent degradation of host MHC-I and CD1D molecules, DC-SIGN and DC-SIGNR, presumably to prevent lysis of infected cells by cytotoxic T-lymphocytes. Binds target molecules through transmembrane interaction. E3 ubiquitin-protein ligases accept ubiquitin from specific E2 ubiquitin-conjugating enzymes, and then transfer it to target protein. The result of this ubiquitination is the enhancement of the endocytosis of the target chain and the delivery to the lysosome, where it is proteolytically destroyed. Induces ubiquitination not only on lysines, but also on cysteine residues. The polypeptide is E3 ubiquitin-protein ligase MIR1 (K3) (Human herpesvirus 8 type P (isolate GK18) (HHV-8)).